Reading from the N-terminus, the 101-residue chain is Small ribosomal subunit protein uS10 (101 aa).

Belongs to the universal ribosomal protein uS10 family. In terms of assembly, part of the 30S ribosomal subunit.

In terms of biological role, involved in the binding of tRNA to the ribosomes. The sequence is that of Small ribosomal subunit protein uS10 from Flavobacterium johnsoniae (strain ATCC 17061 / DSM 2064 / JCM 8514 / BCRC 14874 / CCUG 350202 / NBRC 14942 / NCIMB 11054 / UW101) (Cytophaga johnsonae).